The chain runs to 519 residues: MTAESGDQIPTVHVATSLPKRRVSSSVLIVPVVSTGDDEQSGERPGAVVASAEPFLSADAIAEIEAGLRALDATGASDQVHRLVVSSLPVSSVLTVGLGKPRYEWTPDAVRRAAGAAARALGTAKAVVTTLADLPGDGVCAAAVEGLILGSYRFSAFRSAKTAPKDAGLHKITVLTTTKDARKHCAHGAAVATAVATARDLVNTPPSHLYPAELARRAKVLGESVGLEVQVLDEKALQKAGYGGLVGVGQGSSRPPRLVRLTHRGSRLAKNPRRAKKVALVGKGVTFDTGGISIKPAASMHYMTSDMGGAAAVIATVALAAQLELPINVIATVPIAENMPSATAQRPGDVLTQYGGTTVEVLNTDAEGRLILADAIVRACEDNPDYLIETSTLTGAQTVALGARIPGVMGSDEFRDRVAAISQQVGENGWPMPLPDELKDDLKSTVADLANVSGQRFAGMLVAGVFLREFVADAVDWAHIDVAGPAYNTGSAWGYTPKGATGVPTRTMFAVLEDIAANG.

Mn(2+) is bound by residues Lys283 and Asp288. Lys295 is an active-site residue. Positions 306, 365, and 367 each coordinate Mn(2+). Arg369 is a catalytic residue.

The protein belongs to the peptidase M17 family. It depends on Mn(2+) as a cofactor.

The protein resides in the cytoplasm. The catalysed reaction is Release of an N-terminal amino acid, Xaa-|-Yaa-, in which Xaa is preferably Leu, but may be other amino acids including Pro although not Arg or Lys, and Yaa may be Pro. Amino acid amides and methyl esters are also readily hydrolyzed, but rates on arylamides are exceedingly low.. The enzyme catalyses Release of an N-terminal amino acid, preferentially leucine, but not glutamic or aspartic acids.. Its function is as follows. Presumably involved in the processing and regular turnover of intracellular proteins. Catalyzes the removal of unsubstituted N-terminal amino acids from various peptides. The protein is Probable cytosol aminopeptidase of Mycobacterium ulcerans (strain Agy99).